A 180-amino-acid chain; its full sequence is NAD(P)H-quinone oxidoreductase subunit I, chloroplastic (180 aa).

4Fe-4S ferredoxin-type domains follow at residues 55–84 (GRIHFEFDKCIACEVCVRVCPIDLPVVDWR) and 95–124 (LNYSIDFGICIFCGNCVEYCPTNCLSMTEE). [4Fe-4S] cluster contacts are provided by C64, C67, C70, C74, C104, C107, C110, and C114.

The protein belongs to the complex I 23 kDa subunit family. As to quaternary structure, NDH is composed of at least 16 different subunits, 5 of which are encoded in the nucleus. [4Fe-4S] cluster serves as cofactor.

The protein resides in the plastid. Its subcellular location is the chloroplast thylakoid membrane. The enzyme catalyses a plastoquinone + NADH + (n+1) H(+)(in) = a plastoquinol + NAD(+) + n H(+)(out). It catalyses the reaction a plastoquinone + NADPH + (n+1) H(+)(in) = a plastoquinol + NADP(+) + n H(+)(out). In terms of biological role, NDH shuttles electrons from NAD(P)H:plastoquinone, via FMN and iron-sulfur (Fe-S) centers, to quinones in the photosynthetic chain and possibly in a chloroplast respiratory chain. The immediate electron acceptor for the enzyme in this species is believed to be plastoquinone. Couples the redox reaction to proton translocation, and thus conserves the redox energy in a proton gradient. This is NAD(P)H-quinone oxidoreductase subunit I, chloroplastic from Illicium oligandrum (Star anise).